Reading from the N-terminus, the 869-residue chain is Eukaryotic translation initiation factor 3 subunit C (869 aa).

Disordered regions lie at residues 1-92 and 182-242; these read MSRF…KSAK and IKKA…VGKG. Residues 14 to 55 are compositionally biased toward acidic residues; sequence SSDEEEDLYSDDEEVQEQPEEESSEDDSEEDDDDDDDSDSSS. Over residues 185-203 the composition is skewed to basic and acidic residues; that stretch reads ASKEHQKDIDSFRADKDAY. A PCI domain is found at 607–781; that stretch reads FHMHINLELL…SSIIFRKGVE (175 aa). The disordered stretch occupies residues 803–869; the sequence is NERTLETRTQ…ALGAAVGSRA (67 aa). Positions 823–843 are enriched in gly residues; the sequence is GRGGRGGNRGGRGGGRGGRGG.

It belongs to the eIF-3 subunit C family. Component of the eukaryotic translation initiation factor 3 (eIF-3) complex.

It localises to the cytoplasm. In terms of biological role, component of the eukaryotic translation initiation factor 3 (eIF-3) complex, which is involved in protein synthesis of a specialized repertoire of mRNAs and, together with other initiation factors, stimulates binding of mRNA and methionyl-tRNAi to the 40S ribosome. The eIF-3 complex specifically targets and initiates translation of a subset of mRNAs involved in cell proliferation. The polypeptide is Eukaryotic translation initiation factor 3 subunit C (nip1) (Botryotinia fuckeliana (strain B05.10) (Noble rot fungus)).